The primary structure comprises 217 residues: Zinc finger CCHC-type and RNA-binding motif-containing protein 1 (217 aa).

Positions 10 to 88 (STVYVSNLPF…RVIKASIAID (79 aa)) constitute an RRM domain. The segment at 105–122 (SKCYECGESGHLSYACPK) adopts a CCHC-type zinc-finger fold. Residues 120–217 (CPKNMLGERE…YFSDEEELSD (98 aa)) are disordered. The segment covering 145–163 (PEEEIEEVEVSEEEGEDPA) has biased composition (acidic residues). Ser155, Ser210, and Ser216 each carry phosphoserine.

Component of the U11/U12 snRNPs that are part of the U12-type spliceosome. Interacts with ZRSR1.

It is found in the nucleus. The protein localises to the nucleoplasm. In Rattus norvegicus (Rat), this protein is Zinc finger CCHC-type and RNA-binding motif-containing protein 1 (Zcrb1).